Reading from the N-terminus, the 222-residue chain is Endonuclease V (222 aa).

Mg(2+) contacts are provided by aspartate 34 and aspartate 102.

Belongs to the endonuclease V family. Requires Mg(2+) as cofactor.

It localises to the cytoplasm. The catalysed reaction is Endonucleolytic cleavage at apurinic or apyrimidinic sites to products with a 5'-phosphate.. Its function is as follows. DNA repair enzyme involved in the repair of deaminated bases. Selectively cleaves double-stranded DNA at the second phosphodiester bond 3' to a deoxyinosine leaving behind the intact lesion on the nicked DNA. The sequence is that of Endonuclease V from Proteus mirabilis (strain HI4320).